A 392-amino-acid polypeptide reads, in one-letter code: Proteasomal ATPase-associated factor 1 (392 aa).

At Ala2 the chain carries N-acetylalanine. WD repeat units follow at residues 90–129 (IHTK…LRRV), 132–171 (GHVF…CVVT), 174–215 (GHKG…GVIA), 278–316 (IGSD…TPVQ), and 360–392 (ADCD…LSDL).

It belongs to the WD repeat PAAF1/RPN14 family. In terms of assembly, interacts with PSMC1, PSMC2, PSMC3, PSMC4, PSMC5 and PSMC6. Interacts with SUPT6H.

In terms of biological role, inhibits proteasome 26S assembly and activity by impairing the association of the 19S regulatory complex with the 20S core. Protects SUPT6H from proteasomal degradation. This chain is Proteasomal ATPase-associated factor 1 (PAAF1), found in Bos taurus (Bovine).